The primary structure comprises 181 residues: Protein GrpE (181 aa).

Residues Met-1–Leu-21 are disordered. Over residues Leu-8 to Leu-21 the composition is skewed to low complexity.

It belongs to the GrpE family. Homodimer.

The protein resides in the cytoplasm. Participates actively in the response to hyperosmotic and heat shock by preventing the aggregation of stress-denatured proteins, in association with DnaK and GrpE. It is the nucleotide exchange factor for DnaK and may function as a thermosensor. Unfolded proteins bind initially to DnaJ; upon interaction with the DnaJ-bound protein, DnaK hydrolyzes its bound ATP, resulting in the formation of a stable complex. GrpE releases ADP from DnaK; ATP binding to DnaK triggers the release of the substrate protein, thus completing the reaction cycle. Several rounds of ATP-dependent interactions between DnaJ, DnaK and GrpE are required for fully efficient folding. This chain is Protein GrpE, found in Trichlorobacter lovleyi (strain ATCC BAA-1151 / DSM 17278 / SZ) (Geobacter lovleyi).